The primary structure comprises 257 residues: Glucose-1-phosphate cytidylyltransferase (257 aa).

Substrate contacts are provided by residues 6–10 (LAGGL), 11–13 (GTR), Lys-23, Ser-104, Arg-109, and Gly-128. Positions 129 and 234 each coordinate Mg(2+).

Belongs to the glucose-1-phosphate cytidylyltransferase family. In terms of assembly, homohexamer. Requires Mg(2+) as cofactor.

It carries out the reaction alpha-D-glucose 1-phosphate + CTP + H(+) = CDP-D-glucose + diphosphate. It participates in nucleotide-sugar biosynthesis; CDP-3,6-dideoxy-D-mannose biosynthesis; CDP-3,6-dideoxy-D-mannose from CTP and alpha-D-glucose 1-phosphate: step 1/5. The protein operates within bacterial outer membrane biogenesis; LPS O-antigen biosynthesis. Functionally, involved in the biosynthesis of the tyvelose, a 3,6-dideoxyhexose found in the O-antigen of the surface lipopolysaccharides. It catalyzes the transfer of a CMP moiety from CTP to glucose 1-phosphate. This enzyme can utilize either CTP or UTP as the nucleotide donor. The chain is Glucose-1-phosphate cytidylyltransferase (rfbF) from Salmonella typhi.